The sequence spans 193 residues: dCTP deaminase (193 aa).

DCTP contacts are provided by residues 110–115 (RSSLAR), aspartate 128, 136–138 (VLE), tyrosine 171, lysine 178, and glutamine 182. Glutamate 138 serves as the catalytic Proton donor/acceptor. The tract at residues 174–193 (RKNAKYKDQQEAVASRISQD) is disordered.

The protein belongs to the dCTP deaminase family. Homotrimer.

The catalysed reaction is dCTP + H2O + H(+) = dUTP + NH4(+). Its pathway is pyrimidine metabolism; dUMP biosynthesis; dUMP from dCTP (dUTP route): step 1/2. In terms of biological role, catalyzes the deamination of dCTP to dUTP. This chain is dCTP deaminase, found in Shewanella sp. (strain W3-18-1).